Reading from the N-terminus, the 543-residue chain is Heparanase (543 aa).

The signal sequence occupies residues 1–35 (MLLRSKPALPPPLMLLLLGPLGPLSPGALPRPAQA). Heparan sulfate group-binding positions include 62–64 (DAN) and Thr97. Positions 110-157 (STFEERSYWQSQVNQDICKYGSIPPDVEEKLRLEWPYQEQLLLREHYQ) are cleaved as a propeptide — linker peptide. An intrachain disulfide couples Cys127 to Cys179. 158–162 (KKFKN) contacts heparan sulfate group. N-linked (GlcNAc...) asparagine glycans are attached at residues Asn162, Asn178, Asn200, and Asn217. The active-site Proton donor is Glu225. Asn238 is a glycosylation site (N-linked (GlcNAc...) asparagine). Heparan sulfate group contacts are provided by residues 270–280 (QPRRKTAKMLK), His296, and Arg303. Positions 288–417 (EVIDSVTWHH…LLFKKLVGTK (130 aa)) are required for heterodimerization with the heparanase 8 kDa subunit. The Nucleophile role is filled by Glu343. Heparan sulfate group is bound by residues 348–350 (YGG) and 389–391 (GNY). Cys437 and Cys542 are disulfide-bonded. N-linked (GlcNAc...) asparagine glycosylation occurs at Asn459. Positions 527-543 (FSYSFFVIRNAKVAACI) are required for transferring proheparanase to the Golgi apparatus, secretion and subsequent enzyme activity and for enhancement of PKB/AKT1 phosphorylation.

Belongs to the glycosyl hydrolase 79 family. As to quaternary structure, heterodimer; heterodimer formation between the 8 kDa and the 50 kDa subunits is required for enzyme activity. Interacts with TF; the interaction, inhibited by heparin, enhances the generation of activated factor X and activates coagulation. Interacts with HRG; the interaction is enhanced at acidic pH, partially inhibits binding of HPSE to cell surface receptors and modulates its enzymatic activity. Interacts with SDC1; the interaction enhances the shedding of SDC1. Interacts with HPSE2. In terms of processing, proteolytically processed. The cleavage of the 65 kDa form leads to the generation of a linker peptide, and 8 kDa and 50 kDa products. The active form, the 8/50 kDa heterodimer, is resistant to degradation. Complete removal of the linker peptide appears to be a prerequisite to the complete activation of the enzyme. N-glycosylated. Glycosylation of the 50 kDa subunit appears to be essential for its solubility. As to expression, highly expressed in placenta and spleen and weakly expressed in lymph node, thymus, peripheral blood leukocytes, bone marrow, endothelial cells, fetal liver and tumor tissues. Also expressed in hair follicles, specifically in both Henle's and Huxley's layers of inner the root sheath (IRS) at anagen phase.

It is found in the lysosome membrane. Its subcellular location is the secreted. The protein localises to the nucleus. The enzyme catalyses endohydrolysis of (1-&gt;4)-beta-D-glycosidic bonds of heparan sulfate chains in heparan sulfate proteoglycan.. With respect to regulation, inhibited by EDTA, laminarin sulfate and, to a lower extent, by heparin and sulfamin and activated by calcium and magnesium. Functionally, endoglycosidase that cleaves heparan sulfate proteoglycans (HSPGs) into heparan sulfate side chains and core proteoglycans. Participates in extracellular matrix (ECM) degradation and remodeling. Selectively cleaves the linkage between a glucuronic acid unit and an N-sulfo glucosamine unit carrying either a 3-O-sulfo or a 6-O-sulfo group. Can also cleave the linkage between a glucuronic acid unit and an N-sulfo glucosamine unit carrying a 2-O-sulfo group, but not linkages between a glucuronic acid unit and a 2-O-sulfated iduronic acid moiety. It is essentially inactive at neutral pH but becomes active under acidic conditions such as during tumor invasion and in inflammatory processes. Facilitates cell migration associated with metastasis, wound healing and inflammation. Enhances shedding of syndecans, and increases endothelial invasion and angiogenesis in myelomas. Acts as a procoagulant by increasing the generation of activation factor X in the presence of tissue factor and activation factor VII. Increases cell adhesion to the extracellular matrix (ECM), independent of its enzymatic activity. Induces AKT1/PKB phosphorylation via lipid rafts increasing cell mobility and invasion. Heparin increases this AKT1/PKB activation. Regulates osteogenesis. Enhances angiogenesis through up-regulation of SRC-mediated activation of VEGF. Implicated in hair follicle inner root sheath differentiation and hair homeostasis. The polypeptide is Heparanase (HPSE) (Homo sapiens (Human)).